A 52-amino-acid chain; its full sequence is uncharacterized protein (52 aa).

A helical membrane pass occupies residues 7–27 (MFQLFVFIIFAAVVFAAVTGF).

The protein localises to the membrane. This is an uncharacterized protein from Bacillus subtilis (strain 168).